A 284-amino-acid chain; its full sequence is MAFINSAAEDEVQFEGIKRRLRSSGITKEAVTSLGAGETLEDEFDIASTSDLASGGPVSIRSHGFVPIVVDGKITGYIPYKSNDLTVNVDGGKAAKVTKALSQLTRRTEVTDCKGDAESSLTTALSNAAKLANQAAEAAESGDESKFEEYFKTTDQQTRTTVAERLRAVAKEAGSTSGGSTTYHCSDPYGYCEPNVLAYTLPSKNEIANCDIYYSELPPLAQKCHAQDQATTTLHEFTHAPGVYQPGTEDLGYGYDAATQLSAQDALNNADSYALYANAIELKC.

Disulfide bonds link cysteine 113–cysteine 185 and cysteine 192–cysteine 210. Histidine 235 is a Zn(2+) binding site. Glutamate 236 is an active-site residue. Zn(2+)-binding residues include histidine 239 and aspartate 250.

This sequence belongs to the peptidase M35 family. Zn(2+) is required as a cofactor.

Its subcellular location is the secreted. The enzyme catalyses Preferential cleavage of bonds with hydrophobic residues in P1'. Also 3-Asn-|-Gln-4 and 8-Gly-|-Ser-9 bonds in insulin B chain.. Functionally, secreted metalloproteinase that allows assimilation of proteinaceous substrates. Shows high activities on basic nuclear substrates such as histone and protamine. This is Neutral protease 2 homolog AFLA_119780 from Aspergillus flavus (strain ATCC 200026 / FGSC A1120 / IAM 13836 / NRRL 3357 / JCM 12722 / SRRC 167).